Reading from the N-terminus, the 345-residue chain is Phosphoribosylformylglycinamidine cyclo-ligase (345 aa).

It belongs to the AIR synthase family.

It localises to the cytoplasm. The enzyme catalyses 2-formamido-N(1)-(5-O-phospho-beta-D-ribosyl)acetamidine + ATP = 5-amino-1-(5-phospho-beta-D-ribosyl)imidazole + ADP + phosphate + H(+). It participates in purine metabolism; IMP biosynthesis via de novo pathway; 5-amino-1-(5-phospho-D-ribosyl)imidazole from N(2)-formyl-N(1)-(5-phospho-D-ribosyl)glycinamide: step 2/2. The protein is Phosphoribosylformylglycinamidine cyclo-ligase of Sodalis glossinidius (strain morsitans).